Here is a 63-residue protein sequence, read N- to C-terminus: Large ribosomal subunit protein uL30 (63 aa).

This sequence belongs to the universal ribosomal protein uL30 family. As to quaternary structure, part of the 50S ribosomal subunit.

This Bradyrhizobium sp. (strain ORS 278) protein is Large ribosomal subunit protein uL30.